A 498-amino-acid polypeptide reads, in one-letter code: Glycerol kinase (498 aa).

Thr-12 is an ADP binding site. Positions 12, 13, and 14 each coordinate ATP. Thr-12 is a binding site for sn-glycerol 3-phosphate. Arg-16 is an ADP binding site. Positions 82, 83, 134, and 243 each coordinate sn-glycerol 3-phosphate. Residues Arg-82, Glu-83, Tyr-134, Asp-243, and Gln-244 each contribute to the glycerol site. ADP is bound by residues Thr-265 and Gly-308. Positions 265, 308, 312, and 409 each coordinate ATP. Residues Gly-409 and Asn-413 each contribute to the ADP site.

It belongs to the FGGY kinase family. In terms of assembly, homotetramer and homodimer (in equilibrium).

It catalyses the reaction glycerol + ATP = sn-glycerol 3-phosphate + ADP + H(+). It participates in polyol metabolism; glycerol degradation via glycerol kinase pathway; sn-glycerol 3-phosphate from glycerol: step 1/1. Its activity is regulated as follows. Activated by phosphorylation and inhibited by fructose 1,6-bisphosphate (FBP). In terms of biological role, key enzyme in the regulation of glycerol uptake and metabolism. Catalyzes the phosphorylation of glycerol to yield sn-glycerol 3-phosphate. The chain is Glycerol kinase from Clostridium botulinum (strain ATCC 19397 / Type A).